We begin with the raw amino-acid sequence, 182 residues long: Dynactin subunit 5 (182 aa).

Position 1 is an N-acetylmethionine (Met1).

This sequence belongs to the dynactin subunits 5/6 family. Dynactin subunit 5 subfamily. As to quaternary structure, subunit of dynactin, a multiprotein complex part of a tripartite complex with dynein and a adapter, such as BICDL1, BICD2 or HOOK3. The dynactin complex is built around ACTR1A/ACTB filament and consists of an actin-related filament composed of a shoulder domain, a pointed end and a barbed end. Its length is defined by its flexible shoulder domain. The soulder is composed of 2 DCTN1 subunits, 4 DCTN2 and 2 DCTN3. The 4 DCNT2 (via N-terminus) bind the ACTR1A filament and act as molecular rulers to determine the length. The pointed end is important for binding dynein-dynactin cargo adapters. Consists of 4 subunits: ACTR10, DCNT4, DCTN5 and DCTN6. Within the complex DCTN6 forms a heterodimer with DCTN5. The barbed end is composed of a CAPZA1:CAPZB heterodimers, which binds ACTR1A/ACTB filament and dynactin and stabilizes dynactin. Interacts with N4BP2L1.

It localises to the cytoplasm. Its subcellular location is the cytoskeleton. It is found in the chromosome. The protein resides in the centromere. The protein localises to the kinetochore. Functionally, part of the dynactin complex that activates the molecular motor dynein for ultra-processive transport along microtubules. In Homo sapiens (Human), this protein is Dynactin subunit 5.